The following is a 423-amino-acid chain: MALASGPALRALAGSGRLGLGGYGTPKRGAYEWGVRSTRKPEPRPLDRVYEIPGLEPITYEGKKHFVPWLARPIFPPWERGWNDPRFHRAAPIHEQTLYKEEPCYIFHQRCRLLEGMKQALWLTKTKLIEGLPKKVLSLVDDPANHIENQEQRVLDIISHARLWHSTEDIPKRETYCPLIVDSLIQLCKSQILKHPSLARRTSAQNCTLATTWNRESLLLQVRGTSSTILSAKDPLPVIASREEVEATRSHVLETFYPISPTIDLQECHVYEVKDDTGFQEGYPYPHPHTLYFLEKANLRPQRFLPEQLRAKMLLFAFANALAQARLLYGNTAKVLEQPIVVQSVGTDGRVFQFLVLQLNTTDLASSEGVKNLVWTDSDQLLYRHFWCRPVIKKKVVVEPVGPVDFQPETFRKFLALYLHGVV.

The N-terminal 29 residues, Met-1–Gly-29, are a transit peptide targeting the mitochondrion.

The protein belongs to the mitochondrion-specific ribosomal protein mL37 family. In terms of assembly, component of the mitochondrial ribosome large subunit (39S) which comprises a 16S rRNA and about 50 distinct proteins.

Its subcellular location is the mitochondrion. This is Large ribosomal subunit protein mL37 (Mrpl37) from Mus musculus (Mouse).